The chain runs to 165 residues: 5-formyltetrahydrofolate cyclo-ligase (165 aa).

Position 4-8 (4-8 (KNSLR)) interacts with ATP. The substrate site is built by isoleucine 51 and glutamate 56. Residue 116-124 (RIGFGKGYY) coordinates ATP. Position 125 (aspartate 125) interacts with Mg(2+). Arginine 126 and tryptophan 154 together coordinate ATP. Aspartate 155 contacts Mg(2+).

It belongs to the 5-formyltetrahydrofolate cyclo-ligase family. Monomer or homodimer. The cofactor is Mg(2+).

It is found in the cytoplasm. It carries out the reaction (6S)-5-formyl-5,6,7,8-tetrahydrofolate + ATP = (6R)-5,10-methenyltetrahydrofolate + ADP + phosphate. In terms of biological role, involved in folate metabolism. Catalyzes the irreversible conversion of 5-formyltetrahydrofolate (5-FTHF) to yield 5,10-methenyltetrahydrofolate. This is 5-formyltetrahydrofolate cyclo-ligase from Mycoplasma genitalium (strain ATCC 33530 / DSM 19775 / NCTC 10195 / G37) (Mycoplasmoides genitalium).